The chain runs to 1546 residues: Hybrid signal transduction histidine kinase D (1546 aa).

Residues 36 to 63 (MRKQKPDHEKTREELIEEINHLRAVSNS) are a coiled coil. The PAS domain maps to 65-131 (KNARIMLDEM…NIDNVREAVH (67 aa)). The PAC domain occupies 139-193 (IRYETEIFGKSAGTEKITIDFSLMPLFNDKGEVSLILPEGRNITEKRLGELEIER). The Histidine kinase 1 domain maps to 218 to 440 (NVSHELRTPL…QFTLRLPLTP (223 aa)). The residue at position 221 (histidine 221) is a Phosphohistidine; by autocatalysis. Positions 571 to 686 (IVLVVEDNPE…ELVARVVNLM (116 aa)) constitute a Response regulatory 1 domain. Residue aspartate 619 is modified to 4-aspartylphosphate. Residues 747–1010 (NLSHELRTPL…QFTVVLPIIK (264 aa)) enclose the Histidine kinase 2 domain. Histidine 750 bears the Phosphohistidine; by autocatalysis mark. Low complexity-rich tracts occupy residues 1013–1031 (SSSN…SPPL) and 1042–1146 (NYIN…SNNN). 3 disordered regions span residues 1013–1148 (SSSN…NNEK), 1266–1285 (NNSN…PPSS), and 1313–1350 (PLSE…KANS). The span at 1313-1346 (PLSELKSSSNNNNNNNNNSNNNNNNSMSPNLRSP) shows a compositional bias: low complexity. Residues 1359–1483 (QIMLVDDLEE…ELSNSILTLI (125 aa)) enclose the Response regulatory 2 domain. Aspartate 1412 is subject to 4-aspartylphosphate. Residues 1500–1546 (QNNNNNNNNNNNNNNNNNNNNNNINNGNDDDSLLLTDSRPCKKANSQ) are disordered. Residues 1501–1526 (NNNNNNNNNNNNNNNNNNNNNNINNG) are compositionally biased toward low complexity.

It catalyses the reaction ATP + protein L-histidine = ADP + protein N-phospho-L-histidine.. In terms of biological role, acts as a receptor histidine kinase for a signal transduction pathway. This protein undergoes an ATP-dependent autophosphorylation at a conserved histidine residue in the kinase core, and a phosphoryl group is then transferred to a conserved aspartate residue in the receiver domain. The polypeptide is Hybrid signal transduction histidine kinase D (dhkD) (Dictyostelium discoideum (Social amoeba)).